Reading from the N-terminus, the 266-residue chain is GFP-like fluorescent chromoprotein cFP484 (266 aa).

Positions 104-106 form a cross-link, 2-iminomethyl-5-imidazolinone (Gln-Gly); that stretch reads QYG. A 2,3-didehydrotyrosine modification is found at Y105.

The protein belongs to the GFP family. Contains a chromophore consisting of modified amino acid residues. The chromophore is formed by autocatalytic backbone condensation between Xaa-N and Gly-(N+2), oxidation of Tyr-(N+1) to didehydrotyrosine, and formation of a double bond to the alpha-amino nitrogen of residue Xaa-N. Maturation of the chromophore requires nothing other than molecular oxygen. The precise stereochemistry of the tyrosine has not been determined. In terms of tissue distribution, tentacle and oral disk.

Pigment protein that is green in color. The chain is GFP-like fluorescent chromoprotein cFP484 from Clavularia sp. (Brown star polyp).